The primary structure comprises 327 residues: Probable cell division protein WhiA (327 aa).

Residues S275–R308 constitute a DNA-binding region (H-T-H motif).

It belongs to the WhiA family.

Involved in cell division and chromosome segregation. This Corynebacterium efficiens (strain DSM 44549 / YS-314 / AJ 12310 / JCM 11189 / NBRC 100395) protein is Probable cell division protein WhiA.